The chain runs to 245 residues: MIIPALDLIDGTVVRLHQGDYARQRDYGNDPLPRLQDYAAQGAGVLHLVDLTGAKDPAKRQIPLIKTLVAGVNVPVQVGGGVRTEEDVAALLKAGVARVVIGSTAVKSPDVVKGWFERFGAQALVLALDVRIDEHGTKQVAVSGWQENSGVSLEQLVETYLPVGLKHVLCTDISRDGTLAGSNVSLYEEVCARYPQIAFQSSGGIGDIDDIAALRGTGVRGVIVGRALLEGKFTVKEAIQCWQNV.

The active-site Proton acceptor is the aspartate 7. The active-site Proton donor is the aspartate 129.

The protein belongs to the HisA/HisF family.

Its subcellular location is the cytoplasm. It catalyses the reaction 1-(5-phospho-beta-D-ribosyl)-5-[(5-phospho-beta-D-ribosylamino)methylideneamino]imidazole-4-carboxamide = 5-[(5-phospho-1-deoxy-D-ribulos-1-ylimino)methylamino]-1-(5-phospho-beta-D-ribosyl)imidazole-4-carboxamide. Its pathway is amino-acid biosynthesis; L-histidine biosynthesis; L-histidine from 5-phospho-alpha-D-ribose 1-diphosphate: step 4/9. The chain is 1-(5-phosphoribosyl)-5-[(5-phosphoribosylamino)methylideneamino] imidazole-4-carboxamide isomerase from Salmonella heidelberg (strain SL476).